A 551-amino-acid polypeptide reads, in one-letter code: Cation/acetate symporter ActP (551 aa).

14 helical membrane-spanning segments follow: residues 5–25, 34–54, 77–97, 104–124, 150–170, 184–204, 207–227, 263–283, 304–324, 356–376, 406–426, 430–450, 469–489, and 498–518; these read HWSA…ALTG, IQAI…TYWA, GLAI…SALV, GLIY…LIAE, LSAC…MVGA, VAVV…GMLA, WVQI…AIMV, ISAL…PHIL, GFIG…ILLV, FFLG…VAGL, VSKI…ILFE, IAFM…PIII, LGLS…VTIL, and YEYP…FFSI.

It belongs to the sodium:solute symporter (SSF) (TC 2.A.21) family.

The protein resides in the cell inner membrane. Functionally, transports acetate. This chain is Cation/acetate symporter ActP, found in Yersinia pestis bv. Antiqua (strain Antiqua).